Here is a 379-residue protein sequence, read N- to C-terminus: NAD-dependent protein deacetylase sirtuin-2 (379 aa).

The segment covering 1 to 10 has biased composition (basic and acidic residues); it reads MSEEVSKRVE. The segment at 1–32 is disordered; it reads MSEEVSKRVEEEADTPGLEGQSDDSSDEGDAS. Acidic residues predominate over residues 21–32; the sequence is QSDDSSDEGDAS. Positions 55 to 335 constitute a Deacetylase sirtuin-type domain; it reads KVLDELTLDS…MTLAELLGWK (281 aa). NAD(+)-binding positions include 83 to 87, 93 to 95, and 165 to 168; these read AGIST, DFR, and QNID. His185 serves as the catalytic Proton acceptor. Zn(2+)-binding residues include Cys193, Cys198, Cys219, and Cys222. Residues 260–261, 284–286, and Cys321 contribute to the NAD(+) site; these read TS and NME. Over residues 349–361 the composition is skewed to basic and acidic residues; it reads IDSKDAKKTDKEA. The interval 349 to 379 is disordered; it reads IDSKDAKKTDKEASQSSKSAVAEAEKTDKTE.

The protein belongs to the sirtuin family. Class I subfamily. Requires Zn(2+) as cofactor.

The protein localises to the cytoplasm. Its subcellular location is the nucleus. The enzyme catalyses N(6)-acetyl-L-lysyl-[protein] + NAD(+) + H2O = 2''-O-acetyl-ADP-D-ribose + nicotinamide + L-lysyl-[protein]. It catalyses the reaction N(6)-tetradecanoyl-L-lysyl-[protein] + NAD(+) + H2O = 2''-O-tetradecanoyl-ADP-D-ribose + nicotinamide + L-lysyl-[protein]. It carries out the reaction N(6)-hexadecanoyl-L-lysyl-[protein] + NAD(+) + H2O = 2''-O-hexadecanoyl-ADP-D-ribose + nicotinamide + L-lysyl-[protein]. Functionally, NAD-dependent protein deacetylase, which deacetylates internal lysines on histone and alpha-tubulin as well as many other proteins such as key transcription factors. Participates in the modulation of multiple and diverse biological processes such as cell cycle control, genomic integrity, microtubule dynamics, cell differentiation, metabolic networks, and autophagy. Plays a major role in the control of cell cycle progression and genomic stability. Deacetylates histone H4 at 'Lys-16' (H4K16ac) at the VEGFA promoter. Thereby contributes to regulate expression of vegfa, a key regulator of angiogenesis. In addition to protein deacetylase activity, also has activity toward long-chain fatty acyl groups and mediates protein-lysine demyristoylation and depalmitoylation of target proteins. This Danio rerio (Zebrafish) protein is NAD-dependent protein deacetylase sirtuin-2 (sirt2).